The following is a 278-amino-acid chain: Biotin synthase (278 aa).

The Radical SAM core domain maps to 1-227 (MQIMLCAISN…QSVVMVAGGR (227 aa)). Residues Cys16, Cys20, and Cys23 each contribute to the [4Fe-4S] cluster site. 3 residues coordinate [2Fe-2S] cluster: Cys60, Cys95, and Cys153.

The protein belongs to the radical SAM superfamily. Biotin synthase family. Homodimer. It depends on [4Fe-4S] cluster as a cofactor. The cofactor is [2Fe-2S] cluster.

The enzyme catalyses (4R,5S)-dethiobiotin + (sulfur carrier)-SH + 2 reduced [2Fe-2S]-[ferredoxin] + 2 S-adenosyl-L-methionine = (sulfur carrier)-H + biotin + 2 5'-deoxyadenosine + 2 L-methionine + 2 oxidized [2Fe-2S]-[ferredoxin]. Its pathway is cofactor biosynthesis; biotin biosynthesis; biotin from 7,8-diaminononanoate: step 2/2. In terms of biological role, catalyzes the conversion of dethiobiotin (DTB) to biotin by the insertion of a sulfur atom into dethiobiotin via a radical-based mechanism. The protein is Biotin synthase of Campylobacter jejuni (strain RM1221).